Consider the following 506-residue polypeptide: Aspartic proteinase A1 (506 aa).

An N-terminal signal peptide occupies residues 1–24; that stretch reads MKIYSRTVAVSLIVSFLLCFSAFA. Positions 25-64 are cleaved as a propeptide — activation peptide; that stretch reads ERNDGTFRVGLKKLKLDSKNRLAARVESKQEKPLRAYRLG. The region spanning 82–503 is the Peptidase A1 domain; that stretch reads YYGEIAIGTP…DFGNEQVGFA (422 aa). The active site involves Asp100. Intrachain disulfides connect Cys113/Cys119 and Cys278/Cys282. Asp287 is an active-site residue. Residues 312-417 form the Saposin B-type domain; sequence VVSQQCKTVV…NELCERLPSP (106 aa). Disulfide bonds link Cys317-Cys411, Cys342-Cys383, Cys348-Cys380, and Cys425-Cys462. N-linked (GlcNAc...) asparagine glycosylation is present at Asn397.

The protein belongs to the peptidase A1 family. Expressed in roots, leaves, stems, petals, carpels, seed pods and dry seeds.

The protein resides in the vacuole. Involved in the breakdown of propeptides of storage proteins in protein-storage vacuoles. Possesses aspartic protease activity in vitro. This chain is Aspartic proteinase A1 (APA1), found in Arabidopsis thaliana (Mouse-ear cress).